The following is a 132-amino-acid chain: Small ribosomal subunit protein uS8 (132 aa).

Belongs to the universal ribosomal protein uS8 family. As to quaternary structure, part of the 30S ribosomal subunit. Contacts proteins S5 and S12.

In terms of biological role, one of the primary rRNA binding proteins, it binds directly to 16S rRNA central domain where it helps coordinate assembly of the platform of the 30S subunit. The polypeptide is Small ribosomal subunit protein uS8 (Corynebacterium kroppenstedtii (strain DSM 44385 / JCM 11950 / CIP 105744 / CCUG 35717)).